Reading from the N-terminus, the 507-residue chain is Glycerol kinase (507 aa).

ADP is bound at residue Thr14. Positions 14, 15, and 16 each coordinate ATP. Thr14 is a sn-glycerol 3-phosphate binding site. An ADP-binding site is contributed by Arg18. 4 residues coordinate sn-glycerol 3-phosphate: Arg84, Glu85, Tyr137, and Asp247. Glycerol contacts are provided by Arg84, Glu85, Tyr137, Asp247, and Gln248. ADP contacts are provided by Thr269 and Gly312. The ATP site is built by Thr269, Gly312, Gln316, and Gly413. Residues Gly413 and Asn417 each contribute to the ADP site.

This sequence belongs to the FGGY kinase family.

The enzyme catalyses glycerol + ATP = sn-glycerol 3-phosphate + ADP + H(+). It functions in the pathway polyol metabolism; glycerol degradation via glycerol kinase pathway; sn-glycerol 3-phosphate from glycerol: step 1/1. Its activity is regulated as follows. Inhibited by fructose 1,6-bisphosphate (FBP). Its function is as follows. Key enzyme in the regulation of glycerol uptake and metabolism. Catalyzes the phosphorylation of glycerol to yield sn-glycerol 3-phosphate. This chain is Glycerol kinase, found in Psychromonas ingrahamii (strain DSM 17664 / CCUG 51855 / 37).